Here is a 538-residue protein sequence, read N- to C-terminus: Nicotinate phosphoribosyltransferase (538 aa).

Nicotinate-binding residues include tyrosine 21 and threonine 210. Histidine 213 carries the phosphohistidine modification. Residue arginine 318 coordinates nicotinate. Position 380 (threonine 380) interacts with 5-phospho-alpha-D-ribose 1-diphosphate.

The protein belongs to the NAPRTase family. Homodimer. Requires Mg(2+) as cofactor. Mn(2+) is required as a cofactor. Transiently phosphorylated on a His residue during the reaction cycle. Phosphorylation strongly increases the affinity for substrates and increases the rate of nicotinate D-ribonucleotide production. Dephosphorylation regenerates the low-affinity form of the enzyme, leading to product release.

It is found in the cytoplasm. The protein resides in the cytosol. It catalyses the reaction nicotinate + 5-phospho-alpha-D-ribose 1-diphosphate + ATP + H2O = nicotinate beta-D-ribonucleotide + ADP + phosphate + diphosphate. Its pathway is cofactor biosynthesis; NAD(+) biosynthesis; nicotinate D-ribonucleotide from nicotinate: step 1/1. Its function is as follows. Catalyzes the first step in the biosynthesis of NAD from nicotinic acid, the ATP-dependent synthesis of beta-nicotinate D-ribonucleotide from nicotinate and 5-phospho-D-ribose 1-phosphate. Helps prevent cellular oxidative stress via its role in NAD biosynthesis. In Rattus norvegicus (Rat), this protein is Nicotinate phosphoribosyltransferase (Naprt).